A 195-amino-acid chain; its full sequence is Holliday junction branch migration complex subunit RuvA (195 aa).

A domain I region spans residues 1–64 (MIGRIAGLLL…EDAHLLFGFM (64 aa)). A domain II region spans residues 65 to 140 (TEPERVLFRQ…KISPAITLPE (76 aa)). Positions 140–144 (ETGTA) are flexible linker. The domain III stretch occupies residues 145–195 (MASSTDKDILNALSALGYNDREANWAVGQLSEGVTVSDGIMQSLRLLSKAK).

The protein belongs to the RuvA family. Homotetramer. Forms an RuvA(8)-RuvB(12)-Holliday junction (HJ) complex. HJ DNA is sandwiched between 2 RuvA tetramers; dsDNA enters through RuvA and exits via RuvB. An RuvB hexamer assembles on each DNA strand where it exits the tetramer. Each RuvB hexamer is contacted by two RuvA subunits (via domain III) on 2 adjacent RuvB subunits; this complex drives branch migration. In the full resolvosome a probable DNA-RuvA(4)-RuvB(12)-RuvC(2) complex forms which resolves the HJ.

It is found in the cytoplasm. The RuvA-RuvB-RuvC complex processes Holliday junction (HJ) DNA during genetic recombination and DNA repair, while the RuvA-RuvB complex plays an important role in the rescue of blocked DNA replication forks via replication fork reversal (RFR). RuvA specifically binds to HJ cruciform DNA, conferring on it an open structure. The RuvB hexamer acts as an ATP-dependent pump, pulling dsDNA into and through the RuvAB complex. HJ branch migration allows RuvC to scan DNA until it finds its consensus sequence, where it cleaves and resolves the cruciform DNA. The chain is Holliday junction branch migration complex subunit RuvA from Nitrosomonas europaea (strain ATCC 19718 / CIP 103999 / KCTC 2705 / NBRC 14298).